Consider the following 107-residue polypeptide: Ribonuclease P protein component 4 (107 aa).

4 residues coordinate Zn(2+): Cys66, Cys69, Cys92, and Cys95.

This sequence belongs to the eukaryotic/archaeal RNase P protein component 4 family. In terms of assembly, consists of a catalytic RNA component and at least 4-5 protein subunits. Zn(2+) is required as a cofactor.

Its subcellular location is the cytoplasm. It catalyses the reaction Endonucleolytic cleavage of RNA, removing 5'-extranucleotides from tRNA precursor.. Part of ribonuclease P, a protein complex that generates mature tRNA molecules by cleaving their 5'-ends. The chain is Ribonuclease P protein component 4 from Methanosarcina barkeri (strain Fusaro / DSM 804).